Reading from the N-terminus, the 453-residue chain is Adenosylmethionine-8-amino-7-oxononanoate aminotransferase (453 aa).

Pyridoxal 5'-phosphate is bound at residue 118 to 119 (GA). Y151 is a binding site for substrate. D257 is a pyridoxal 5'-phosphate binding site. Positions 286, 321, and 416 each coordinate substrate. Position 286 is an N6-(pyridoxal phosphate)lysine (K286).

The protein belongs to the class-III pyridoxal-phosphate-dependent aminotransferase family. BioA subfamily. As to quaternary structure, homodimer. Requires pyridoxal 5'-phosphate as cofactor.

The protein resides in the cytoplasm. The enzyme catalyses (8S)-8-amino-7-oxononanoate + S-adenosyl-L-methionine = S-adenosyl-4-methylsulfanyl-2-oxobutanoate + (7R,8S)-7,8-diammoniononanoate. It participates in cofactor biosynthesis; biotin biosynthesis; 7,8-diaminononanoate from 8-amino-7-oxononanoate (SAM route): step 1/1. Its function is as follows. Catalyzes the transfer of the alpha-amino group from S-adenosyl-L-methionine (SAM) to 7-keto-8-aminopelargonic acid (KAPA) to form 7,8-diaminopelargonic acid (DAPA). It is the only aminotransferase known to utilize SAM as an amino donor. This chain is Adenosylmethionine-8-amino-7-oxononanoate aminotransferase, found in Aquifex aeolicus (strain VF5).